The primary structure comprises 346 residues: Olfactory receptor 13D1 (346 aa).

Residues 1-57 (MYRFTDFDVSNISIYLNHVLFYTTQQAGDLEHMETRNYSAMTEFFLVGLSQYPELQL) lie on the Extracellular side of the membrane. Asparagine 37 carries N-linked (GlcNAc...) asparagine glycosylation. The helical transmembrane segment at 58-78 (FLFLLCLIMYMIILLGNSLLI) threads the bilayer. Topologically, residues 79 to 86 (IITILDSR) are cytoplasmic. The chain crosses the membrane as a helical span at residues 87–107 (LHTPMYFFLGNLSFLDICYTS). Topologically, residues 108–131 (SSIPPMLIIFMSERKSISFIGCAL) are extracellular. The cysteines at positions 129 and 221 are disulfide-linked. A helical transmembrane segment spans residues 132-152 (QMVVSLGLGSTECVLLAVMAY). Over 153–171 (DHYVAICNPLRYSIIMNGV) the chain is Cytoplasmic. The helical transmembrane segment at 172 to 192 (LYVQMAAWSWIIGCLTSLLQT) threads the bilayer. Over 193 to 229 (VLTMMLPFCGNNVIDHITCEILALLKLVCSDITINVL) the chain is Extracellular. A helical membrane pass occupies residues 230–249 (IMTVTNIVSLVILLLLIFIS). The Cytoplasmic segment spans residues 250–269 (YVFILSSILRINCAEGRKKA). A helical transmembrane segment spans residues 270–290 (FSTCSAHSIVVILFYGSALFM). Residues 291–303 (YMKPKSKNTNTSD) are Extracellular-facing. Residue asparagine 300 is glycosylated (N-linked (GlcNAc...) asparagine). The chain crosses the membrane as a helical span at residues 304 to 324 (EIIGLSYGVVSPMLNPIIYSL). Residues 325-346 (RNKEVKEAVKKVLSRHLHLLKM) lie on the Cytoplasmic side of the membrane.

The protein belongs to the G-protein coupled receptor 1 family.

The protein resides in the cell membrane. Functionally, odorant receptor. The polypeptide is Olfactory receptor 13D1 (OR13D1) (Homo sapiens (Human)).